Reading from the N-terminus, the 189-residue chain is Lutzicidin (189 aa).

A signal peptide spans 1 to 22 (MQGFFWKTLLVVALCGTSSSLA). Positions 23–155 (HRPLSYGEAL…DEEKDRPKRV (133 aa)) are excised as a propeptide. Cystine bridges form between cysteine 79–cysteine 90 and cysteine 101–cysteine 118. A compositionally biased stretch (acidic residues) spans 125–148 (EEEEEDEEEQKAEVEKDEEKEDEE). The tract at residues 125–152 (EEEEEDEEEQKAEVEKDEEKEDEEKDRP) is disordered.

It belongs to the cathelicidin family. Expressed by the venom gland.

Its subcellular location is the secreted. The protein localises to the target cell membrane. In terms of biological role, potent antimicrobial peptide against Gram-negative and Gram-positive bacteria. Adopts an amphipathic alpha helical conformation, that may allow to partition into the target membrane. Low hemolytic activities have been observed on mammalian cells. The polypeptide is Lutzicidin (Bothrops lutzi (Sertao lancehead)).